Consider the following 240-residue polypeptide: Transcriptional regulatory protein rxt2 (240 aa).

It belongs to the RXT2 family. In terms of assembly, component of the RPD3C(L) complex.

It localises to the nucleus. Component of the RPD3C(L) histone deacetylase complex (HDAC) responsible for the deacetylation of lysine residues on the N-terminal part of the core histones (H2A, H2B, H3 and H4). Histone deacetylation gives a tag for epigenetic repression and plays an important role in transcriptional regulation, cell cycle progression and developmental events. In Schizosaccharomyces pombe (strain 972 / ATCC 24843) (Fission yeast), this protein is Transcriptional regulatory protein rxt2 (rtx2).